Reading from the N-terminus, the 643-residue chain is 3D-(3,5/4)-trihydroxycyclohexane-1,2-dione hydrolase (643 aa).

Residue Glu65 coordinates thiamine diphosphate. Positions 441–521 are thiamine pyrophosphate binding; the sequence is SLPGDLQRMW…VNVLLFDNCG (81 aa). The Mg(2+) site is built by Asp492 and Asn519.

It belongs to the TPP enzyme family. The cofactor is Mg(2+). It depends on thiamine diphosphate as a cofactor.

It catalyses the reaction 3D-3,5/4-trihydroxycyclohexane-1,2-dione + H2O = 5-deoxy-D-glucuronate + H(+). It participates in polyol metabolism; myo-inositol degradation into acetyl-CoA; acetyl-CoA from myo-inositol: step 3/7. Its function is as follows. Involved in the cleavage of the C1-C2 bond of 3D-(3,5/4)-trihydroxycyclohexane-1,2-dione (THcHDO) to yield 5-deoxy-glucuronate (5DG). This chain is 3D-(3,5/4)-trihydroxycyclohexane-1,2-dione hydrolase, found in Clostridium botulinum (strain Alaska E43 / Type E3).